Here is a 137-residue protein sequence, read N- to C-terminus: Large ribosomal subunit protein uL16 (137 aa).

This sequence belongs to the universal ribosomal protein uL16 family. In terms of assembly, part of the 50S ribosomal subunit.

Functionally, binds 23S rRNA and is also seen to make contacts with the A and possibly P site tRNAs. In Methylocella silvestris (strain DSM 15510 / CIP 108128 / LMG 27833 / NCIMB 13906 / BL2), this protein is Large ribosomal subunit protein uL16.